A 208-amino-acid polypeptide reads, in one-letter code: Flavin-dependent thymidylate synthase (208 aa).

A ThyX domain is found at 1 to 208; the sequence is MEVICKHYTP…QYLFEDCLKH (208 aa). Residues serine 50 and 74-76 each bind FAD; that span reads RHR. DUMP is bound by residues 71 to 74, 84 to 86, and lysine 147; these read ELSR and SSR. A ThyX motif motif is present at residues 74-84; that stretch reads RHRIASLSVKS. FAD contacts are provided by residues 163 to 165 and asparagine 169; that span reads NAR. Arginine 174 is a binding site for dUMP. Arginine 174 serves as the catalytic Involved in ionization of N3 of dUMP, leading to its activation.

It belongs to the thymidylate synthase ThyX family. As to quaternary structure, homotetramer. FAD is required as a cofactor.

The enzyme catalyses dUMP + (6R)-5,10-methylene-5,6,7,8-tetrahydrofolate + NADPH + H(+) = dTMP + (6S)-5,6,7,8-tetrahydrofolate + NADP(+). It participates in pyrimidine metabolism; dTTP biosynthesis. In terms of biological role, catalyzes the reductive methylation of 2'-deoxyuridine-5'-monophosphate (dUMP) to 2'-deoxythymidine-5'-monophosphate (dTMP) while utilizing 5,10-methylenetetrahydrofolate (mTHF) as the methyl donor, and NAD(P)H and FADH(2) as the reductant. The protein is Flavin-dependent thymidylate synthase of Helicobacter pylori (strain ATCC 700392 / 26695) (Campylobacter pylori).